The chain runs to 28 residues: U15-ctenitoxin-Co1a (28 aa).

2 cysteine pairs are disulfide-bonded: cysteine 3-cysteine 17 and cysteine 10-cysteine 22.

As to expression, expressed by the venom gland.

The protein resides in the secreted. Functionally, insecticidal neurotoxin that reversibly inhibits the N-methyl-D-aspartate (NMDA)-subtype of ionotropic glutamate receptor (GRIN) and inhibits inactivation of insect sodium channels (Nav). In vivo, is highly toxic to insects. The chain is U15-ctenitoxin-Co1a from Ctenus ornatus (Brazilian spider).